A 203-amino-acid polypeptide reads, in one-letter code: Large ribosomal subunit protein bL25 (203 aa).

This sequence belongs to the bacterial ribosomal protein bL25 family. CTC subfamily. As to quaternary structure, part of the 50S ribosomal subunit; part of the 5S rRNA/L5/L18/L25 subcomplex. Contacts the 5S rRNA. Binds to the 5S rRNA independently of L5 and L18.

Its function is as follows. This is one of the proteins that binds to the 5S RNA in the ribosome where it forms part of the central protuberance. This Rickettsia prowazekii (strain Madrid E) protein is Large ribosomal subunit protein bL25.